The following is a 911-amino-acid chain: Epithelial discoidin domain-containing receptor 1 (911 aa).

Positions 1–19 (MGTGTLSSLLLLLLLVTIG) are cleaved as a signal peptide. Residues 22-415 (DMKGHFDPAK…VAKAEGSPTA (394 aa)) are Extracellular-facing. Residues 32–186 (CRYALGMQDR…VCLRVELYGC (155 aa)) form the F5/8 type C domain. Intrachain disulfides connect C32-C186 and C75-C178. The DS-like domain stretch occupies residues 193-369 (LSYTAPVGQT…LFSEISFISD (177 aa)). N213, Q232, D235, V237, Y255, and Y257 together coordinate Ca(2+). N213 is a glycosylation site (N-linked (GlcNAc...) asparagine). A glycan (N-linked (GlcNAc...) asparagine) is linked at N262. A disulfide bond links C305 and C350. The Ca(2+) site is built by S362 and E363. N-linked (GlcNAc...) asparagine glycans are attached at residues N372 and N392. A helical transmembrane segment spans residues 416-436 (ILIGCLVAIILLLLLIIALML). Topologically, residues 437–911 (WRLHWRRLLS…FLADDALNTV (475 aa)) are cytoplasmic. A disordered region spans residues 468-496 (ILINNRPGPREPPPYQEPRPRGTPPHSAP). Residues 477-494 (REPPPYQEPRPRGTPPHS) are compositionally biased toward pro residues. Residues 479–482 (PPPY) carry the PPxY motif motif. Y482, Y511, and Y518 each carry phosphotyrosine; by autocatalysis. The Protein kinase domain occupies 608-903 (LRFKEKLGEG…PPFAQLHRFL (296 aa)). Residues 614-622 (LGEGQFGEV) and K653 each bind ATP. A Phosphotyrosine; by autocatalysis modification is found at Y738. D764 serves as the catalytic Proton acceptor. Phosphotyrosine; by autocatalysis is present on residues Y790, Y794, and Y795.

Belongs to the protein kinase superfamily. Tyr protein kinase family. Insulin receptor subfamily. As to quaternary structure, homodimer. Interacts (via PPxY motif) with WWC1 (via WW domains) in a collagen-regulated manner. Forms a tripartite complex with WWC1 and PRKCZ, but predominantly in the absence of collagen. Interacts (tyrosine phosphorylated) with SHC1. Interacts with SRC. Interacts with MYH9. Interacts with CDH1. Interacts with PTPN11. Interacts with NCK2. In terms of processing, autophosphorylated in response to fibrillar collagen binding. In terms of tissue distribution, detected in the cochlea and the organ of Corti in the inner ear. Isoform 1 is predominant and is expressed in developing embryo and adult brain. Isoform 2 is expressed in various epithelial cells.

Its subcellular location is the cell membrane. It carries out the reaction L-tyrosyl-[protein] + ATP = O-phospho-L-tyrosyl-[protein] + ADP + H(+). Its function is as follows. Tyrosine kinase that functions as a cell surface receptor for fibrillar collagen and regulates cell attachment to the extracellular matrix, remodeling of the extracellular matrix, cell migration, differentiation, survival and cell proliferation. Collagen binding triggers a signaling pathway that involves SRC and leads to the activation of MAP kinases. Regulates remodeling of the extracellular matrix by up-regulation of the matrix metalloproteinases MMP2, MMP7 and MMP9, and thereby facilitates cell migration and wound healing, but also tumor cell invasion. Promotes smooth muscle cell migration, and thereby contributes to arterial wound healing. Phosphorylates PTPN11. Required for normal blastocyst implantation during pregnancy, for normal mammary gland differentiation and normal lactation. Required for normal ear morphology and normal hearing. The polypeptide is Epithelial discoidin domain-containing receptor 1 (Ddr1) (Mus musculus (Mouse)).